The sequence spans 63 residues: MAAVCDVCAKGPGFGKSVSHSHRRTNRRWNPNIQTVRAQVAPGNTRRMNVCTSCLKAGKVVRG.

Belongs to the bacterial ribosomal protein bL28 family.

The polypeptide is Large ribosomal subunit protein bL28A (Nocardia farcinica (strain IFM 10152)).